Reading from the N-terminus, the 94-residue chain is Small ribosomal subunit protein uS19 (94 aa).

This sequence belongs to the universal ribosomal protein uS19 family.

Protein S19 forms a complex with S13 that binds strongly to the 16S ribosomal RNA. In Moorella thermoacetica (strain ATCC 39073 / JCM 9320), this protein is Small ribosomal subunit protein uS19.